The chain runs to 631 residues: Glutamyl-tRNA(Gln) amidotransferase subunit E (631 aa).

This sequence belongs to the GatB/GatE family. GatE subfamily. Heterodimer of GatD and GatE.

It catalyses the reaction L-glutamyl-tRNA(Gln) + L-glutamine + ATP + H2O = L-glutaminyl-tRNA(Gln) + L-glutamate + ADP + phosphate + H(+). In terms of biological role, allows the formation of correctly charged Gln-tRNA(Gln) through the transamidation of misacylated Glu-tRNA(Gln) in organisms which lack glutaminyl-tRNA synthetase. The reaction takes place in the presence of glutamine and ATP through an activated gamma-phospho-Glu-tRNA(Gln). The GatDE system is specific for glutamate and does not act on aspartate. The sequence is that of Glutamyl-tRNA(Gln) amidotransferase subunit E from Methanococcus maripaludis (strain C5 / ATCC BAA-1333).